The following is a 101-amino-acid chain: MIPGEYQLADGDIQANVGRKTVKLEVVNTGDRPIQVGSHYHFFETNHALKFDRLQARGMRLNVPSGNAVRFEPGEAKEVELVEFGGNKVIYGFHNEIDGKL.

This sequence belongs to the urease beta subunit family. In terms of assembly, heterotrimer of UreA (gamma), UreB (beta) and UreC (alpha) subunits. Three heterotrimers associate to form the active enzyme.

It localises to the cytoplasm. It carries out the reaction urea + 2 H2O + H(+) = hydrogencarbonate + 2 NH4(+). Its pathway is nitrogen metabolism; urea degradation; CO(2) and NH(3) from urea (urease route): step 1/1. In Actinobacillus pleuropneumoniae serotype 5b (strain L20), this protein is Urease subunit beta.